Here is a 142-residue protein sequence, read N- to C-terminus: UPF0336 protein PPA1896 (142 aa).

Belongs to the UPF0336 family.

This Cutibacterium acnes (strain DSM 16379 / KPA171202) (Propionibacterium acnes) protein is UPF0336 protein PPA1896.